Here is a 248-residue protein sequence, read N- to C-terminus: Triosephosphate isomerase A (248 aa).

Positions 11 and 13 each coordinate substrate. The Electrophile role is filled by H95. E165 serves as the catalytic Proton acceptor.

Belongs to the triosephosphate isomerase family. In terms of assembly, homodimer.

Its subcellular location is the cytoplasm. It carries out the reaction dihydroxyacetone phosphate = methylglyoxal + phosphate. The catalysed reaction is D-glyceraldehyde 3-phosphate = dihydroxyacetone phosphate. It participates in carbohydrate degradation; glycolysis; D-glyceraldehyde 3-phosphate from glycerone phosphate: step 1/1. It functions in the pathway carbohydrate biosynthesis; gluconeogenesis. Functionally, triosephosphate isomerase is an extremely efficient metabolic enzyme that catalyzes the interconversion between dihydroxyacetone phosphate (DHAP) and D-glyceraldehyde-3-phosphate (G3P) in glycolysis and gluconeogenesis. Its function is as follows. It is also responsible for the non-negligible production of methylglyoxal a reactive cytotoxic side-product that modifies and can alter proteins, DNA and lipids. The protein is Triosephosphate isomerase A (tpi1a) of Danio rerio (Zebrafish).